Reading from the N-terminus, the 171-residue chain is UPF0398 protein SEQ_1788 (171 aa).

The protein belongs to the UPF0398 family.

In Streptococcus equi subsp. equi (strain 4047), this protein is UPF0398 protein SEQ_1788.